A 957-amino-acid chain; its full sequence is UvrABC system protein A (957 aa).

33 to 40 (GLSGSGKS) lines the ATP pocket. The C4-type zinc finger occupies 252–279 (CPHCGFSIGELEPRLFSFNSPFGACPTC). 2 consecutive ABC transporter domains span residues 309–587 (WTPI…PNSL) and 607–935 (PDGR…RYLK). 639–646 (GVSGSGKS) is a binding site for ATP. The C4-type zinc-finger motif lies at 738-764 (CEACRGDGIIKIEMHFLPDVYVPCEVC).

It belongs to the ABC transporter superfamily. UvrA family. In terms of assembly, forms a heterotetramer with UvrB during the search for lesions.

It localises to the cytoplasm. In terms of biological role, the UvrABC repair system catalyzes the recognition and processing of DNA lesions. UvrA is an ATPase and a DNA-binding protein. A damage recognition complex composed of 2 UvrA and 2 UvrB subunits scans DNA for abnormalities. When the presence of a lesion has been verified by UvrB, the UvrA molecules dissociate. This is UvrABC system protein A from Bacillus subtilis (strain 168).